The sequence spans 333 residues: MSDGSRTALSKSTFHFAAGLGSGVLSAVLLQPIDLLKTRVQQSGAHSLSAAIADIRAAPRLLPALWRGAVPSALRTGFGSAIYFTSLNAIRQSAARISPLPSSSSSTTTSSSTTTSSSSSSLPKLSNTSNLLAGAAARSLAGLILMPLTVLKVRYESTLYNYTSLASAARDIAAHEGARGFFAGYGATAVRDAPYAGLYVLFYEQGKKRLSQLFPTTTTTTTTNSTQNGPMGLQHAASINFASGVLAGVICSVVSNPFDAVKTRIQLQPGRYRNMVSGARRMVGEEGVRALWDGLALRMSRKAVSSALAWTVYEELIRRAEAGWRAGAARERL.

Solcar repeat units follow at residues 10-93 (SKST…IRQS), 125-209 (LSNT…GKKR), and 235-319 (HAAS…LIRR). 2 helical membrane passes run 16–41 (FAAGLGSGVLSAVLLQPIDLLKTRVQ) and 68–94 (GAVPSALRTGFGSAIYFTSLNAIRQSA). Residues 98-126 (SPLPSSSSSTTTSSSTTTSSSSSSLPKLS) form a disordered region. 4 helical membrane-spanning segments follow: residues 131-156 (LLAGAAARSLAGLILMPLTVLKVRYE), 184-207 (GYGATAVRDAPYAGLYVLFYEQGK), 239-265 (INFASGVLAGVICSVVSNPFDAVKTRI), and 294-312 (GLALRMSRKAVSSALAWTV).

Belongs to the mitochondrial carrier (TC 2.A.29) family. SLC25A38 subfamily.

The protein localises to the mitochondrion inner membrane. The enzyme catalyses glycine(in) = glycine(out). In terms of biological role, mitochondrial glycine transporter that imports glycine into the mitochondrial matrix. Plays an important role in providing glycine for the first enzymatic step in heme biosynthesis, the condensation of glycine with succinyl-CoA to produce 5-aminolevulinate (ALA) in the mitochondrial matrix. The protein is Mitochondrial glycine transporter of Chaetomium globosum (strain ATCC 6205 / CBS 148.51 / DSM 1962 / NBRC 6347 / NRRL 1970) (Soil fungus).